Reading from the N-terminus, the 352-residue chain is Glycerol-1-phosphate dehydrogenase [NAD(P)+] (352 aa).

Residues 99–103 and 121–124 each bind NAD(+); these read GAKID and TAPS. D126 serves as a coordination point for substrate. S130 is an NAD(+) binding site. D173 provides a ligand contact to substrate. Positions 173 and 253 each coordinate Zn(2+). H257 serves as a coordination point for substrate. H269 is a Zn(2+) binding site.

This sequence belongs to the glycerol-1-phosphate dehydrogenase family. The cofactor is Zn(2+).

The protein resides in the cytoplasm. It catalyses the reaction sn-glycerol 1-phosphate + NAD(+) = dihydroxyacetone phosphate + NADH + H(+). The enzyme catalyses sn-glycerol 1-phosphate + NADP(+) = dihydroxyacetone phosphate + NADPH + H(+). The protein operates within membrane lipid metabolism; glycerophospholipid metabolism. In terms of biological role, catalyzes the NAD(P)H-dependent reduction of dihydroxyacetonephosphate (DHAP or glycerone phosphate) to glycerol 1-phosphate (G1P). The G1P thus generated is used as the glycerophosphate backbone of phospholipids in the cellular membranes of Archaea. The sequence is that of Glycerol-1-phosphate dehydrogenase [NAD(P)+] from Thermoplasma acidophilum (strain ATCC 25905 / DSM 1728 / JCM 9062 / NBRC 15155 / AMRC-C165).